A 296-amino-acid chain; its full sequence is Low affinity immunoglobulin gamma Fc region receptor II (296 aa).

An N-terminal signal peptide occupies residues 1–42 (MGIPSFLAFPAARRNRAHCTPWHPWGHMLLWTALLFLAPVSG). Topologically, residues 43–225 (KPDLPKAVVT…SSSSGPSSMT (183 aa)) are extracellular. Ig-like C2-type domains follow at residues 47 to 129 (PKAV…DVIS) and 130 to 212 (DWLL…VNIT). Disulfide bonds link Cys-70–Cys-112 and Cys-151–Cys-195. Asn-79, Asn-86, Asn-105, Asn-179, Asn-186, and Asn-210 each carry an N-linked (GlcNAc...) asparagine glycan. Residues 226–246 (AVAIGTCFAAVAIVAAIITWF) traverse the membrane as a helical segment. Over 247–296 (RLRRKPISAGLTDAENDAARTEAENTVTYSLLSHPDVAEEDSESDYQKRL) the chain is Cytoplasmic. The ITIM motif motif lies at 273 to 278 (VTYSLL). Position 275 is a phosphotyrosine; by SRC-type Tyr-kinases (Tyr-275). Ser-288 bears the Phosphoserine mark. Tyr-292 is subject to Phosphotyrosine.

As to quaternary structure, interacts with FGR and LYN. In terms of processing, phosphorylated by SRC-type Tyr-kinases such as LYN, BLK, FYN and SYK. As to expression, higher expression is found in macrophages than in neutrophils.

Its subcellular location is the cell membrane. Its function is as follows. Binds to the Fc region of immunoglobulins gamma. Low affinity receptor. This is Low affinity immunoglobulin gamma Fc region receptor II (FCGR2) from Bos taurus (Bovine).